Reading from the N-terminus, the 494-residue chain is Splicing regulatory glutamine/lysine-rich protein 1 (494 aa).

The RRM domain maps to 69–145 (RTVYVGNLNS…RPLKINHSNN (77 aa)). A phosphoserine mark is found at serine 174 and serine 187. The disordered stretch occupies residues 176-494 (ISAAIEPESG…ESPCSKADAV (319 aa)). Residues 183-192 (ESGKSNERKG) are compositionally biased toward basic and acidic residues. The span at 193 to 262 (GRSRSHTRSK…KSRSRSRSRD (70 aa)) shows a compositional bias: basic residues. A compositionally biased stretch (basic and acidic residues) spans 263 to 340 (KRKDTREKVK…DRSKETDEKR (78 aa)). The residue at position 348 (threonine 348) is a Phosphothreonine. Over residues 357–373 (RRSRSTSRERRRRRSRS) the composition is skewed to basic residues. Over residues 404–474 (REKERDHISD…SPRTEDEGKV (71 aa)) the composition is skewed to basic and acidic residues. A compositionally biased stretch (polar residues) spans 476–486 (HNGNCQPNEES). Lysine 490 participates in a covalent cross-link: Glycyl lysine isopeptide (Lys-Gly) (interchain with G-Cter in SUMO2).

Belongs to the splicing factor SR family. As to quaternary structure, homodimer. Binds SFRS1, SFRS2, SFRS3 and SFRS6. Interacts with the spliceosome. Interacts with SREK1IP1.

The protein localises to the nucleus. Participates in the regulation of alternative splicing by modulating the activity of other splice facors. Inhibits the splicing activity of SFRS1, SFRS2 and SFRS6. Augments the splicing activity of SFRS3. In Mus musculus (Mouse), this protein is Splicing regulatory glutamine/lysine-rich protein 1 (Srek1).